Reading from the N-terminus, the 1391-residue chain is CAP-Gly domain-containing linker protein 1 (1391 aa).

Residues 1–53 (MSMLKPSGLKAPTKILKPGSTALKTPAAAAAPVEKTIPSEKASGPPSSETQEE) are disordered. Serine 48 carries the phosphoserine modification. Threonine 50 carries the post-translational modification Phosphothreonine. In terms of domain architecture, CAP-Gly 1 spans 78 to 120 (GETQFAPGQWAGIVLDEPIGKNDGSVAGVRYFQCEPLKGIFTR). The segment at 97 to 101 (GKNDG) is important for tubulin binding. The tract at residues 129-182 (QAEDEANGLQAAPGRTASPLSTAAATMVSSSPATPSNIPHKPSQSTAKEPSATP) is disordered. Phosphoserine is present on serine 146. The segment covering 146 to 182 (SPLSTAAATMVSSSPATPSNIPHKPSQSTAKEPSATP) has biased composition (polar residues). Position 181 is a phosphothreonine (threonine 181). Phosphoserine is present on residues serine 194, serine 196, serine 199, and serine 203. A CAP-Gly 2 domain is found at 231-273 (GETDFAKGEWCGVELDEPLGKNDGAVAGTRYFQCQPKYGLFAP). The segment covering 302-331 (TPASLKRSPSASSLSSMSSVASSVSSKPSR) has biased composition (low complexity). The tract at residues 302 to 336 (TPASLKRSPSASSLSSMSSVASSVSSKPSRTGLLT) is disordered. Residue serine 309 is modified to Phosphoserine. Serine 311 carries the phosphoserine; by PKA modification. Phosphoserine occurs at positions 314, 347, and 1189. The stretch at 349 to 1306 (TTALQEALKE…VEMMSEAALN (958 aa)) forms a coiled coil. A disordered region spans residues 1251-1272 (KRQLSSSSGNTDAQAEEDERAQ). Serine 1317 bears the Phosphoserine mark. A CCHC-type zinc finger spans residues 1370–1387 (PYCEICEMFGHWATNCND).

As to quaternary structure, interacts with MTOR; phosphorylates and regulates CLIP1. Interacts (via CAP-Gly domains) with tubulin. Interacts with SLAIN2. Interacts with TUBA1B, MAPRE1 and MAPRE3. Interacts (via zinc finger) with DCTN1. Binds preferentially to tyrosinated microtubules, and only marginally to detyrosinated microtubules. In terms of processing, phosphorylated. Phosphorylation induces conformational changes by increasing the affinity of the N-terminus for C-terminus, resulting in inhibition of its function thus decreasing its binding to microtubules and DCTN1. Exhibits a folded, autoinhibited conformation when phosphorylated and an open conformation when dephosphorylated with increased binding affinity to microtubules and DCTN1. Phosphorylation regulates its recruitment to tyrosinated microtubules and the recruitment of vesicular cargo to microtubules in neurons. Phosphorylation by MTOR may positively regulate CLIP1 association with microtubules. As to expression, expressed in the testes (at protein level).

The protein localises to the cytoplasm. Its subcellular location is the cytoskeleton. The protein resides in the cytoplasmic vesicle membrane. It localises to the cell projection. It is found in the ruffle. In terms of biological role, binds to the plus end of microtubules and regulates the dynamics of the microtubule cytoskeleton. Promotes microtubule growth and microtubule bundling. Links cytoplasmic vesicles to microtubules and thereby plays an important role in intracellular vesicle trafficking. Plays a role macropinocytosis and endosome trafficking. This Mus musculus (Mouse) protein is CAP-Gly domain-containing linker protein 1 (Clip1).